We begin with the raw amino-acid sequence, 478 residues long: Glycogen synthase (478 aa).

Lys-15 is an ADP-alpha-D-glucose binding site.

The protein belongs to the glycosyltransferase 1 family. Bacterial/plant glycogen synthase subfamily.

It carries out the reaction [(1-&gt;4)-alpha-D-glucosyl](n) + ADP-alpha-D-glucose = [(1-&gt;4)-alpha-D-glucosyl](n+1) + ADP + H(+). It functions in the pathway glycan biosynthesis; glycogen biosynthesis. Synthesizes alpha-1,4-glucan chains using ADP-glucose. This is Glycogen synthase from Lactococcus lactis subsp. lactis (strain IL1403) (Streptococcus lactis).